The following is a 363-amino-acid chain: Spermatogenesis-associated protein 22 (363 aa).

2 stretches are compositionally biased toward polar residues: residues 1–12 (MKRSLNENSARS) and 145–157 (SCPMSSGAQQQKQ). Disordered stretches follow at residues 1-51 (MKRS…DNYD) and 145-169 (SCPMSSGAQQQKQFGIPEPPNLPRN).

As to quaternary structure, component of a multiprotein complex with MEIOB and RPA2. Interacts with MEIOB. Interacts with the complex BRME1:HSF2BP:BRCA2. In terms of tissue distribution, expressed in testis.

It localises to the chromosome. Its function is as follows. Meiosis-specific protein required for homologous recombination in meiosis I. The protein is Spermatogenesis-associated protein 22 (SPATA22) of Macaca fascicularis (Crab-eating macaque).